The following is a 329-amino-acid chain: Phosphate acyltransferase (329 aa).

It belongs to the PlsX family. In terms of assembly, homodimer. Probably interacts with PlsY.

It is found in the cytoplasm. The catalysed reaction is a fatty acyl-[ACP] + phosphate = an acyl phosphate + holo-[ACP]. It participates in lipid metabolism; phospholipid metabolism. Its function is as follows. Catalyzes the reversible formation of acyl-phosphate (acyl-PO(4)) from acyl-[acyl-carrier-protein] (acyl-ACP). This enzyme utilizes acyl-ACP as fatty acyl donor, but not acyl-CoA. In Geobacillus sp. (strain WCH70), this protein is Phosphate acyltransferase.